Here is a 727-residue protein sequence, read N- to C-terminus: Transcription activator of gluconeogenesis TRV_01442 (727 aa).

Polar residues predominate over residues 1–32 (MSPHQTTGQESDNMTVNGENAQASSQYIQSNE). The interval 1 to 62 (MSPHQTTGQE…PSRPKRKKAK (62 aa)) is disordered. Positions 39-55 (ATEKKASAAKAAKDPSR) are enriched in basic and acidic residues. Residues 65–93 (CYACQRGHLTCGDERPCQRCIKRGFQDAC) constitute a DNA-binding region (zn(2)-C6 fungal-type). Composition is skewed to polar residues over residues 129 to 213 (NNVN…TPSA), 267 to 277 (PSDSGAQRGSI), and 361 to 379 (MMTT…GAFN). 5 disordered regions span residues 129-224 (NNVN…FNST), 264-297 (DTPP…ESPS), 353-399 (SPAS…STPQ), 533-567 (NHNV…YNSS), and 627-666 (GSNG…QRRW). Composition is skewed to low complexity over residues 380–399 (SRQN…STPQ) and 543–553 (GLMTGSTSRGS). A compositionally biased stretch (polar residues) spans 639–661 (EATSNETNELNGSHTNGATTNGR).

The protein belongs to the ERT1/acuK family.

The protein resides in the nucleus. Its function is as follows. Transcription factor which regulates nonfermentable carbon utilization. Activator of gluconeogenetic genes. The polypeptide is Transcription activator of gluconeogenesis TRV_01442 (Trichophyton verrucosum (strain HKI 0517)).